We begin with the raw amino-acid sequence, 636 residues long: Probable potassium transport system protein Kup (636 aa).

12 helical membrane passes run 23-43 (LVIG…LYSL), 63-83 (IISL…VVFV), 114-134 (VLMM…VITP), 150-170 (PQLS…LFLI), 182-202 (FGPV…YNLV), 217-237 (ISFL…VFLV), 260-280 (WFVL…AMLL), 298-318 (LLIP…QAVI), 350-370 (IYLP…VISF), 379-399 (AYGI…AVVM), 407-427 (PALV…FFAA), and 432-452 (VAEG…LLMT).

This sequence belongs to the HAK/KUP transporter (TC 2.A.72) family.

The protein localises to the cell inner membrane. It carries out the reaction K(+)(in) + H(+)(in) = K(+)(out) + H(+)(out). Functionally, transport of potassium into the cell. Likely operates as a K(+):H(+) symporter. In Cupriavidus pinatubonensis (strain JMP 134 / LMG 1197) (Cupriavidus necator (strain JMP 134)), this protein is Probable potassium transport system protein Kup.